The sequence spans 70 residues: Putative venom toxin Ts29 (70 aa).

A signal peptide spans 1 to 20; sequence MSPLFVVLLIATTTFYHSDA.

Expressed by the venom gland.

It localises to the secreted. The protein is Putative venom toxin Ts29 of Tityus serrulatus (Brazilian scorpion).